Here is a 126-residue protein sequence, read N- to C-terminus: Large ribosomal subunit protein uL22 (126 aa).

Belongs to the universal ribosomal protein uL22 family. In terms of assembly, part of the 50S ribosomal subunit.

Functionally, this protein binds specifically to 23S rRNA; its binding is stimulated by other ribosomal proteins, e.g. L4, L17, and L20. It is important during the early stages of 50S assembly. It makes multiple contacts with different domains of the 23S rRNA in the assembled 50S subunit and ribosome. The globular domain of the protein is located near the polypeptide exit tunnel on the outside of the subunit, while an extended beta-hairpin is found that lines the wall of the exit tunnel in the center of the 70S ribosome. The protein is Large ribosomal subunit protein uL22 of Prochlorococcus marinus (strain NATL2A).